The primary structure comprises 63 residues: MIKQELRDKDTKELHIELLGLFREQFNLRMQAASGQLQQTHLLKKVRNKIARVKTLLTDNTGV.

This sequence belongs to the universal ribosomal protein uL29 family.

This chain is Large ribosomal subunit protein uL29, found in Baumannia cicadellinicola subsp. Homalodisca coagulata.